The sequence spans 488 residues: Ribulose bisphosphate carboxylase large chain (488 aa).

Substrate-binding residues include asparagine 127 and threonine 177. Catalysis depends on lysine 179, which acts as the Proton acceptor. Lysine 181 serves as a coordination point for substrate. Mg(2+)-binding residues include lysine 205, aspartate 207, and glutamate 208. The residue at position 205 (lysine 205) is an N6-carboxylysine. Histidine 297 acts as the Proton acceptor in catalysis. Substrate is bound by residues arginine 298, histidine 330, and serine 382.

This sequence belongs to the RuBisCO large chain family. Type I subfamily. As to quaternary structure, heterohexadecamer of 8 large chains and 8 small chains. The cofactor is Mg(2+).

Its subcellular location is the plastid. It localises to the chloroplast. The catalysed reaction is 2 (2R)-3-phosphoglycerate + 2 H(+) = D-ribulose 1,5-bisphosphate + CO2 + H2O. The enzyme catalyses D-ribulose 1,5-bisphosphate + O2 = 2-phosphoglycolate + (2R)-3-phosphoglycerate + 2 H(+). Functionally, ruBisCO catalyzes two reactions: the carboxylation of D-ribulose 1,5-bisphosphate, the primary event in carbon dioxide fixation, as well as the oxidative fragmentation of the pentose substrate in the photorespiration process. Both reactions occur simultaneously and in competition at the same active site. The chain is Ribulose bisphosphate carboxylase large chain from Antithamnion sp. (Red alga).